We begin with the raw amino-acid sequence, 182 residues long: Keratin, type II cytoskeletal 68 kDa, component IA (182 aa).

The 66-residue stretch at 1–66 folds into the IF rod domain; the sequence is DAEQHGEVAL…TLLEGEECRM (66 aa). The segment at 1-66 is coil 2B; the sequence is DAEQHGEVAL…TLLEGEECRM (66 aa). An H2 subdomain region spans residues 67 to 86; that stretch reads SGECQSSVSIEMVHNTTSSS. A tail region spans residues 67–182; sequence SGECQSSVSI…SQSQRSHHKL (116 aa). Residues 87 to 162 are V2 subdomain; sequence SGGSGALGGG…GSCAVSGVGG (76 aa). The segment covering 104-124 has biased composition (gly residues); sequence GSGGLGSGSLGSGRLGSGGRG. The tract at residues 104-182 is disordered; the sequence is GSGGLGSGSL…SQSQRSHHKL (79 aa). Low complexity-rich tracts occupy residues 144-158 and 165-176; these read VRGS…CAVS and SVRVTQSSSQSQ. The E2 subdomain stretch occupies residues 163-182; it reads RGSVRVTQSSSQSQRSHHKL.

Belongs to the intermediate filament family. As to quaternary structure, heterotetramer of two type I and two type II keratins.

The polypeptide is Keratin, type II cytoskeletal 68 kDa, component IA (Bos taurus (Bovine)).